Here is a 1406-residue protein sequence, read N- to C-terminus: DNA-directed RNA polymerase subunit beta' (1406 aa).

Residues Cys72, Cys74, Cys87, and Cys90 each coordinate Zn(2+). The Mg(2+) site is built by Asp462, Asp464, and Asp466. Residues Cys816, Cys891, Cys898, and Cys901 each coordinate Zn(2+).

It belongs to the RNA polymerase beta' chain family. As to quaternary structure, the RNAP catalytic core consists of 2 alpha, 1 beta, 1 beta' and 1 omega subunit. When a sigma factor is associated with the core the holoenzyme is formed, which can initiate transcription. Mg(2+) is required as a cofactor. It depends on Zn(2+) as a cofactor.

The enzyme catalyses RNA(n) + a ribonucleoside 5'-triphosphate = RNA(n+1) + diphosphate. Functionally, DNA-dependent RNA polymerase catalyzes the transcription of DNA into RNA using the four ribonucleoside triphosphates as substrates. In Psychrobacter arcticus (strain DSM 17307 / VKM B-2377 / 273-4), this protein is DNA-directed RNA polymerase subunit beta'.